Consider the following 238-residue polypeptide: MEVDTMETLIRLFVSILIICVLALMIKKSRCLDNEGVIGSSIMGFILLYFCGFKYLILLLSFFILGVLVSRVGLEKKKAKKMDETCRSLKNVLANGLIPILFAILAIFGFNWALIGYISSIAAATSDTFSSELGILSNEKPRLITTFEVVEKGTDGAITIFGTLAGVLGAFLIGLFGYLLFGDIKIVLCGTAGGIAGNLADSLVGALFERKGILNNEHVNLIATIVGGIIGVLIYCTL.

The next 5 membrane-spanning stretches (helical) occupy residues 6-26 (METL…ALMI), 45-65 (FILL…FFIL), 98-118 (IPIL…IGYI), 160-180 (IFGT…GYLL), and 186-206 (IVLC…LVGA).

Belongs to the TMEM19 family.

Its subcellular location is the cell membrane. This is an uncharacterized protein from Methanocaldococcus jannaschii (strain ATCC 43067 / DSM 2661 / JAL-1 / JCM 10045 / NBRC 100440) (Methanococcus jannaschii).